A 258-amino-acid chain; its full sequence is Phosphate import ATP-binding protein PstB 2 (258 aa).

The ABC transporter domain occupies 12 to 253 (IQVRDLNFYY…PQQKQTEDYI (242 aa)). Residue 44-51 (GPSGCGKS) coordinates ATP.

This sequence belongs to the ABC transporter superfamily. Phosphate importer (TC 3.A.1.7) family. In terms of assembly, the complex is composed of two ATP-binding proteins (PstB), two transmembrane proteins (PstC and PstA) and a solute-binding protein (PstS).

The protein resides in the cell inner membrane. It carries out the reaction phosphate(out) + ATP + H2O = ADP + 2 phosphate(in) + H(+). Functionally, part of the ABC transporter complex PstSACB involved in phosphate import. Responsible for energy coupling to the transport system. The sequence is that of Phosphate import ATP-binding protein PstB 2 from Yersinia pestis bv. Antiqua (strain Nepal516).